Consider the following 217-residue polypeptide: Adenylate kinase (217 aa).

ATP is bound at residue 10-15; the sequence is GAGKGT. Residues 30 to 59 form an NMP region; sequence STGDILRAAVSEMTPMGVKAKGYMESGALV. Residues Thr-31, Arg-36, 57–59, 85–88, and Gln-92 contribute to the AMP site; these read ALV and GFPR. Residues 126 to 163 are LID; that stretch reads GRRTCRLCGKGYHVVFDPPRVSGRCDECLGELFQRDDD. Arg-127 contacts ATP. Zn(2+) contacts are provided by Cys-130, Cys-133, Cys-150, and Cys-153. AMP-binding residues include Arg-160 and Arg-171. Position 199 (Gly-199) interacts with ATP.

Belongs to the adenylate kinase family. In terms of assembly, monomer.

It localises to the cytoplasm. The enzyme catalyses AMP + ATP = 2 ADP. Its pathway is purine metabolism; AMP biosynthesis via salvage pathway; AMP from ADP: step 1/1. In terms of biological role, catalyzes the reversible transfer of the terminal phosphate group between ATP and AMP. Plays an important role in cellular energy homeostasis and in adenine nucleotide metabolism. The polypeptide is Adenylate kinase (Geotalea uraniireducens (strain Rf4) (Geobacter uraniireducens)).